Here is a 245-residue protein sequence, read N- to C-terminus: tRNA pseudouridine synthase A (245 aa).

Asp-52 acts as the Nucleophile in catalysis. Tyr-110 is a binding site for substrate.

This sequence belongs to the tRNA pseudouridine synthase TruA family. In terms of assembly, homodimer.

It catalyses the reaction uridine(38/39/40) in tRNA = pseudouridine(38/39/40) in tRNA. Formation of pseudouridine at positions 38, 39 and 40 in the anticodon stem and loop of transfer RNAs. This is tRNA pseudouridine synthase A from Borrelia hermsii (strain HS1 / DAH).